Here is a 455-residue protein sequence, read N- to C-terminus: Bifunctional protein GlmU (455 aa).

A pyrophosphorylase region spans residues 1-228 (MYKCALVLAA…FEETIGVNSR (228 aa)). Residues 8 to 11 (LAAG), K22, Q73, and 78 to 79 (GT) contribute to the UDP-N-acetyl-alpha-D-glucosamine site. A Mg(2+)-binding site is contributed by D103. UDP-N-acetyl-alpha-D-glucosamine is bound by residues G140, E154, N169, and N226. N226 is a binding site for Mg(2+). The segment at 229 to 249 (AQLAQAEEILKDRINLKHMEN) is linker. The N-acetyltransferase stretch occupies residues 250–455 (GVTLIDPKTT…GWVDKKGLKK (206 aa)). Residues R331 and K349 each contribute to the UDP-N-acetyl-alpha-D-glucosamine site. The active-site Proton acceptor is the H361. 2 residues coordinate UDP-N-acetyl-alpha-D-glucosamine: Y364 and N375. Acetyl-CoA-binding positions include 384-385 (NY), A421, and R438.

This sequence in the N-terminal section; belongs to the N-acetylglucosamine-1-phosphate uridyltransferase family. The protein in the C-terminal section; belongs to the transferase hexapeptide repeat family. Homotrimer. Requires Mg(2+) as cofactor.

The protein localises to the cytoplasm. It catalyses the reaction alpha-D-glucosamine 1-phosphate + acetyl-CoA = N-acetyl-alpha-D-glucosamine 1-phosphate + CoA + H(+). The enzyme catalyses N-acetyl-alpha-D-glucosamine 1-phosphate + UTP + H(+) = UDP-N-acetyl-alpha-D-glucosamine + diphosphate. It participates in nucleotide-sugar biosynthesis; UDP-N-acetyl-alpha-D-glucosamine biosynthesis; N-acetyl-alpha-D-glucosamine 1-phosphate from alpha-D-glucosamine 6-phosphate (route II): step 2/2. Its pathway is nucleotide-sugar biosynthesis; UDP-N-acetyl-alpha-D-glucosamine biosynthesis; UDP-N-acetyl-alpha-D-glucosamine from N-acetyl-alpha-D-glucosamine 1-phosphate: step 1/1. The protein operates within bacterial outer membrane biogenesis; LPS lipid A biosynthesis. In terms of biological role, catalyzes the last two sequential reactions in the de novo biosynthetic pathway for UDP-N-acetylglucosamine (UDP-GlcNAc). The C-terminal domain catalyzes the transfer of acetyl group from acetyl coenzyme A to glucosamine-1-phosphate (GlcN-1-P) to produce N-acetylglucosamine-1-phosphate (GlcNAc-1-P), which is converted into UDP-GlcNAc by the transfer of uridine 5-monophosphate (from uridine 5-triphosphate), a reaction catalyzed by the N-terminal domain. This Clostridium botulinum (strain Eklund 17B / Type B) protein is Bifunctional protein GlmU.